A 459-amino-acid polypeptide reads, in one-letter code: Bifunctional protein GlmU (459 aa).

The interval 1 to 230 is pyrophosphorylase; that stretch reads MSNRFAVILA…FDETLGVNDR (230 aa). UDP-N-acetyl-alpha-D-glucosamine-binding positions include 9–12, Lys23, Gln73, and 78–79; these read LAAG and GT. A Mg(2+)-binding site is contributed by Asp103. Residues Gly140, Glu155, Asn170, and Asn228 each coordinate UDP-N-acetyl-alpha-D-glucosamine. Asn228 is a Mg(2+) binding site. Residues 231–251 are linker; the sequence is VALSQAEIIMKNRINRKNMVN. An N-acetyltransferase region spans residues 252–459; it reads GVTIIDPSNT…VDQLLNKKKS (208 aa). Residues Arg333 and Lys351 each contribute to the UDP-N-acetyl-alpha-D-glucosamine site. His363 acts as the Proton acceptor in catalysis. UDP-N-acetyl-alpha-D-glucosamine is bound by residues Tyr366 and Asn377. Residues 386 to 387, Ala423, and Arg440 each bind acetyl-CoA; that span reads NY.

In the N-terminal section; belongs to the N-acetylglucosamine-1-phosphate uridyltransferase family. The protein in the C-terminal section; belongs to the transferase hexapeptide repeat family. Homotrimer. The cofactor is Mg(2+).

The protein resides in the cytoplasm. It catalyses the reaction alpha-D-glucosamine 1-phosphate + acetyl-CoA = N-acetyl-alpha-D-glucosamine 1-phosphate + CoA + H(+). It carries out the reaction N-acetyl-alpha-D-glucosamine 1-phosphate + UTP + H(+) = UDP-N-acetyl-alpha-D-glucosamine + diphosphate. It functions in the pathway nucleotide-sugar biosynthesis; UDP-N-acetyl-alpha-D-glucosamine biosynthesis; N-acetyl-alpha-D-glucosamine 1-phosphate from alpha-D-glucosamine 6-phosphate (route II): step 2/2. The protein operates within nucleotide-sugar biosynthesis; UDP-N-acetyl-alpha-D-glucosamine biosynthesis; UDP-N-acetyl-alpha-D-glucosamine from N-acetyl-alpha-D-glucosamine 1-phosphate: step 1/1. Its pathway is bacterial outer membrane biogenesis; LPS lipid A biosynthesis. In terms of biological role, catalyzes the last two sequential reactions in the de novo biosynthetic pathway for UDP-N-acetylglucosamine (UDP-GlcNAc). The C-terminal domain catalyzes the transfer of acetyl group from acetyl coenzyme A to glucosamine-1-phosphate (GlcN-1-P) to produce N-acetylglucosamine-1-phosphate (GlcNAc-1-P), which is converted into UDP-GlcNAc by the transfer of uridine 5-monophosphate (from uridine 5-triphosphate), a reaction catalyzed by the N-terminal domain. This Bacillus cereus (strain ATCC 14579 / DSM 31 / CCUG 7414 / JCM 2152 / NBRC 15305 / NCIMB 9373 / NCTC 2599 / NRRL B-3711) protein is Bifunctional protein GlmU.